A 716-amino-acid chain; its full sequence is Zinc finger protein on ecdysone puffs (716 aa).

Disordered stretches follow at residues 103-168 and 182-208; these read PSLL…GGIR and KNANQNKKKEPTPGEKKIESPTKESPY. The segment covering 188–203 has biased composition (basic and acidic residues); the sequence is KKKEPTPGEKKIESPT. Ser-201 bears the Phosphoserine mark. Phosphothreonine is present on Thr-203. Phosphoserine is present on Ser-206. A C2H2-type 1 zinc finger spans residues 216–240; the sequence is FYCHLCKKHMWDANSFENHIKGRTH. The C2H2-type 2; atypical zinc-finger motif lies at 288–310; it reads DYCTMCDLNFHGHISTHRKSEGH. The C2H2-type 3 zinc finger occupies 319–343; it reads PKCIECNKEFATRIDYDTHLLSAEH. A compositionally biased stretch (basic and acidic residues) spans 350–359; sequence NNTKVGERKR. Positions 350 to 447 are disordered; that stretch reads NNTKVGERKR…EEEEVALPVD (98 aa). The Nuclear localization signal motif lies at 379–383; that stretch reads KRKKK. Residues 386–401 are compositionally biased toward basic and acidic residues; that stretch reads KKEGEAADGEAKKEGA. Acidic residues predominate over residues 405–414; that stretch reads EGAEGDEAEG. Residues 415-431 are compositionally biased toward basic and acidic residues; sequence EEAKEGEEAADETKEGD. Over residues 432-447 the composition is skewed to acidic residues; it reads ELNESQEEEEVALPVD. The C2H2-type 4 zinc-finger motif lies at 489–513; the sequence is YECSVCSKFFDTEVTAEIHSRTATH. A disordered region spans residues 534–716; sequence RAAAALEENE…QRARGRYNRY (183 aa). A compositionally biased stretch (basic and acidic residues) spans 541–551; sequence ENERKKRKVEE. A Nuclear localization signal motif is present at residues 544–548; sequence RKKRK. Acidic residues predominate over residues 560-638; the sequence is AAEETTEGAE…GQEGEQEPEP (79 aa). Residues 639–656 show a composition bias toward pro residues; that stretch reads EPAPVQTPAPAEPAPPAK. Residues 657 to 704 are compositionally biased toward low complexity; sequence TPAKTPTKAAAPAAVASPAAAATSADASPSPAKKATPARAAAGAKATP. Ser-673, Ser-684, and Ser-686 each carry phosphoserine. The residue at position 692 (Thr-692) is a Phosphothreonine. The segment covering 707–716 has biased composition (basic residues); sequence QRARGRYNRY.

It localises to the nucleus. The protein localises to the chromosome. In terms of biological role, may play a role in the process of early and late gene activation, or possibly in RNA processing, for a defined set of developmentally regulated loci. The protein is Zinc finger protein on ecdysone puffs (Pep) of Drosophila melanogaster (Fruit fly).